The chain runs to 360 residues: Inward rectifier potassium channel 13 (360 aa).

Topologically, residues 1-50 are cytoplasmic; it reads MESSNCKVITPLLSQRHRRMVTKDGHSTLQTDGAPRGLVYLRDAWGTLID. A helical transmembrane segment spans residues 51–77; the sequence is MRWRWVMLVFSASFVLHWLVFAVLWYV. At 78–105 the chain is on the extracellular side; the sequence is LAEMNGDLELDHDAPPENHTICVKYITS. The segment at residues 106–122 is an intramembrane region (helical; Pore-forming); it reads FTAAFSFSLETQLTIGY. Positions 119-124 match the Selectivity filter motif; the sequence is TIGYGT. Topologically, residues 123–131 are extracellular; the sequence is GTMFPSGDC. Residues 132-157 traverse the membrane as a helical segment; it reads PSAIALLAIQMLLGLMLEAFITGAFV. At 158 to 360 the chain is on the cytoplasmic side; sequence AKIARPKNRA…FQISETGLTE (203 aa). A Phosphoserine; by PKC modification is found at Ser-201. Ser-287 bears the Phosphoserine; by PKA mark.

The protein belongs to the inward rectifier-type potassium channel (TC 1.A.2.1) family. KCNJ13 subfamily. Homotetramer. Phosphorylation at Ser-201 by PKC strongly inhibits ionic currents, while phosphorylation at Ser-287 by PKA increases them.

The protein resides in the membrane. The protein localises to the cell membrane. The catalysed reaction is K(+)(in) = K(+)(out). Its activity is regulated as follows. Inhibited by Ba(2+) and Cs(+), although sensitivity to those inhibitors is much lower than in other Kir channels. In terms of biological role, inward rectifier potassium channels are characterized by a greater tendency to allow potassium to flow into the cell rather than out of it. Their voltage dependence is regulated by the concentration of extracellular potassium; as external potassium is raised, the voltage range of the channel opening shifts to more positive voltages. The inward rectification is mainly due to the blockage of outward current by internal magnesium. KCNJ13 has a very low single channel conductance, low sensitivity to block by external barium and cesium, and no dependence of its inward rectification properties on the internal blocking particle magnesium. The protein is Inward rectifier potassium channel 13 (KCNJ13) of Cavia porcellus (Guinea pig).